The chain runs to 450 residues: Phosphoglucosamine mutase (450 aa).

Serine 101 (phosphoserine intermediate) is an active-site residue. Serine 101, aspartate 240, aspartate 242, and aspartate 244 together coordinate Mg(2+). Serine 101 is modified (phosphoserine).

It belongs to the phosphohexose mutase family. Mg(2+) is required as a cofactor. Post-translationally, activated by phosphorylation.

The catalysed reaction is alpha-D-glucosamine 1-phosphate = D-glucosamine 6-phosphate. Functionally, catalyzes the conversion of glucosamine-6-phosphate to glucosamine-1-phosphate. This Streptococcus equi subsp. zooepidemicus (strain H70) protein is Phosphoglucosamine mutase.